A 232-amino-acid polypeptide reads, in one-letter code: Ion-translocating oxidoreductase complex subunit E (232 aa).

Helical transmembrane passes span 18-38, 39-59, 69-89, 93-113, 128-148, and 182-202; these read GLVQLLGLCPLLAVTATLTNA, LGLGLATVAVLIGSNVLVSLV, IPVFVMIIAALVTVVQLVINA, GLYLSLGIFLPLIVTNCVIIG, AFDGLMMGTGFTAVLAVLGAV, and SFLLAMLPPGAFIAMGLLIAG.

It belongs to the NqrDE/RnfAE family. The complex is composed of six subunits: RnfA, RnfB, RnfC, RnfD, RnfE and RnfG.

It is found in the cell inner membrane. In terms of biological role, part of a membrane-bound complex that couples electron transfer with translocation of ions across the membrane. The polypeptide is Ion-translocating oxidoreductase complex subunit E (Shewanella amazonensis (strain ATCC BAA-1098 / SB2B)).